The sequence spans 158 residues: Regulator of sigma D (158 aa).

The protein belongs to the Rsd/AlgQ family. Interacts with RpoD.

It is found in the cytoplasm. Functionally, binds RpoD and negatively regulates RpoD-mediated transcription activation by preventing the interaction between the primary sigma factor RpoD with the catalytic core of the RNA polymerase and with promoter DNA. May be involved in replacement of the RNA polymerase sigma subunit from RpoD to RpoS during the transition from exponential growth to the stationary phase. This is Regulator of sigma D from Escherichia coli O6:H1 (strain CFT073 / ATCC 700928 / UPEC).